The sequence spans 503 residues: Splicing factor 3A subunit 3 (503 aa).

2 disordered regions span residues 296–317 and 341–384; these read PALMAKKPSAKTASAQSREHER and ATKE…NPKN. The segment covering 358-377 has biased composition (acidic residues); the sequence is DDSDVEASESDNEDDPDADD. Phosphoserine is present on residues Ser360, Ser365, and Ser367. The Matrin-type zinc-finger motif lies at 408-439; the sequence is YNCEICGNFTYKGPKAFQRHFAEWRHAHGMRC.

This sequence belongs to the SF3A3 family. In terms of assembly, probable component of a the U2 small nuclear ribonucleoproteins complex (U2 snRNP). Ubiquitous. In ovaries and testes, it is expressed in all germ and somatic cells. Highly expressed in spermatogonias and spermatocytes. Highly expressed in the germ cells of larval testes, while it is weakly expressed in fat body cells, in polyploid nuclei of salivary glands, and in larval brain.

The protein resides in the nucleus. Its function is as follows. Probable subunit of a splicing factor complex required for 'A' complex assembly formed by the stable binding of U2 snRNP to the branchpoint sequence (BPS) in pre-mRNA. Involved in male fertility. This Drosophila melanogaster (Fruit fly) protein is Splicing factor 3A subunit 3 (noi).